We begin with the raw amino-acid sequence, 131 residues long: Small ribosomal subunit protein eS17 (131 aa).

This sequence belongs to the eukaryotic ribosomal protein eS17 family.

The polypeptide is Small ribosomal subunit protein eS17 (RPS17) (Theileria annulata).